We begin with the raw amino-acid sequence, 240 residues long: Allene oxide cyclase, chloroplastic (240 aa).

The transit peptide at Met-1 to Arg-49 directs the protein to the chloroplast.

The protein belongs to the allene oxide cyclase family.

It localises to the plastid. The protein localises to the chloroplast. It carries out the reaction (9Z,13S,15Z)-12,13-epoxyoctadeca-9,11,15-trienoate = (9S,13S,15Z)-12-oxophyto-10,15-dienoate. Its pathway is lipid metabolism; polyunsaturated fatty acid biosynthesis. Involved in the production of 12-oxo-phytodienoic acid (OPDA), a precursor of jasmonic acid (JA). Required for the production of JA in response to wounding. Necessary for flower and coleoptile development regulation by light, including blue (BL), red (RL) and far red (FR) lights. Involved in the auxin-mediated signaling pathway leading to growth stimulation. Essential for photodestruction of phyA upon activation by RL and FR. Implicated in responses to salt stress (NaCl). Its function is as follows. Confers resistance to incompatible strains of the blast fungus Magnaporthe grisea, jasmonic acid (JA) thus playing a significant role in the resistance to fungal infection. Implicated in riboflavin-induced resistance to the sheath blight Rhizoctonia solani. Required for Pseudomonas fluorescens-mediated JA-dependent induced systemic resistance (ISR). Confers some resistance, independently of the JA pathway but probably via OPDA accumulation, to brown planthopper (BPH, Nilaparvata lugens), a destructive, monophagous, piercing-sucking insect, mainly by reducing its feeding activity and survival rate. Triggers resistance to the chewing insect striped stem borer (SSB) Chilo suppressalis, to the root hemiparasite witchweed Striga hermonthica, and to the root feeder insect rice water weevil Lissorhoptrus oryzophilus, in a JA-dependent manner, by attenuating both the growth mass and growth rate of caterpillars. The polypeptide is Allene oxide cyclase, chloroplastic (Oryza sativa subsp. indica (Rice)).